The sequence spans 35 residues: U5-ctenitoxin-Co1a (35 aa).

Cystine bridges form between cysteine 4/cysteine 18, cysteine 11/cysteine 24, cysteine 17/cysteine 32, and cysteine 26/cysteine 30.

In terms of tissue distribution, expressed by the venom gland.

Its subcellular location is the secreted. Its function is as follows. Blocks voltage-gated sodium channels (Nav). This chain is U5-ctenitoxin-Co1a, found in Ctenus ornatus (Brazilian spider).